Consider the following 33-residue polypeptide: HAGTYTSDVSSYLQDQAAKEFVSWLKTGRGRRD.

It belongs to the glucagon family.

It is found in the secreted. Functionally, promotes hydrolysis of glycogen and lipids, and raises the blood sugar level. The polypeptide is Glucagon-2 (gcg2) (Oreochromis niloticus (Nile tilapia)).